Consider the following 424-residue polypeptide: Enolase (424 aa).

A (2R)-2-phosphoglycerate-binding site is contributed by glutamine 162. Glutamate 204 functions as the Proton donor in the catalytic mechanism. Mg(2+) contacts are provided by aspartate 241, glutamate 284, and aspartate 311. 4 residues coordinate (2R)-2-phosphoglycerate: lysine 336, arginine 365, serine 366, and lysine 387. The Proton acceptor role is filled by lysine 336.

This sequence belongs to the enolase family. Requires Mg(2+) as cofactor.

It localises to the cytoplasm. Its subcellular location is the secreted. The protein resides in the cell surface. The catalysed reaction is (2R)-2-phosphoglycerate = phosphoenolpyruvate + H2O. Its pathway is carbohydrate degradation; glycolysis; pyruvate from D-glyceraldehyde 3-phosphate: step 4/5. Its function is as follows. Catalyzes the reversible conversion of 2-phosphoglycerate (2-PG) into phosphoenolpyruvate (PEP). It is essential for the degradation of carbohydrates via glycolysis. The sequence is that of Enolase from Chelativorans sp. (strain BNC1).